The primary structure comprises 775 residues: Polyribonucleotide nucleotidyltransferase (775 aa).

The interval D223–D247 is disordered. The span at R231 to R243 shows a compositional bias: basic residues. Mg(2+) contacts are provided by D567 and D573. The KH domain occupies P633–I692. Positions G704–V773 constitute an S1 motif domain.

The protein belongs to the polyribonucleotide nucleotidyltransferase family. Mg(2+) serves as cofactor.

It is found in the cytoplasm. It carries out the reaction RNA(n+1) + phosphate = RNA(n) + a ribonucleoside 5'-diphosphate. Functionally, involved in mRNA degradation. Catalyzes the phosphorolysis of single-stranded polyribonucleotides processively in the 3'- to 5'-direction. In Corynebacterium kroppenstedtii (strain DSM 44385 / JCM 11950 / CIP 105744 / CCUG 35717), this protein is Polyribonucleotide nucleotidyltransferase.